Consider the following 420-residue polypeptide: MQNLLEALVPRSLVHDQTPGLQARLAQGPITGYVGFDPTADSLHVGHLLAVMSLAWLQRCGGTPIIVVGGGTGMVGDPSGKRSERPVLSVEEIDRNVAAIRAQLERFVSFEGQNAARVRNNADWLRSIGLMEFLRDVGKHFTVNYMLAKDSVKGRMESGISFTEFSYQLIQAYDFWHLFHAERCELQMGGSDQWGNITAGAELVSRKDGASVHGLTFPLLTTASGTKFGKTEGGAVWLDPARTSPYKFFQFWLNTDDRDVERLLKFFTFLSLDEIAALLAEQARDPGKRPAQRRLAEDVTARVHGPDVTRSVIEASRILFGGTDLRAAGVDVLDVLAGEIPSATVTGDELAALTVADLLVKVGLAASKGEVRRGVAGRGFSLNGAVLESGDAKVAAGELLAGGYALLQKGKRNYALVKVR.

An L-tyrosine-binding site is contributed by Tyr-33. The 'HIGH' region signature appears at 38-47 (PTADSLHVGH). 2 residues coordinate L-tyrosine: Tyr-167 and Gln-171. The 'KMSKS' region signature appears at 227-231 (KFGKT). Lys-230 serves as a coordination point for ATP. The S4 RNA-binding domain maps to 353–419 (LTVADLLVKV…GKRNYALVKV (67 aa)).

The protein belongs to the class-I aminoacyl-tRNA synthetase family. TyrS type 1 subfamily. Homodimer.

The protein localises to the cytoplasm. The catalysed reaction is tRNA(Tyr) + L-tyrosine + ATP = L-tyrosyl-tRNA(Tyr) + AMP + diphosphate + H(+). In terms of biological role, catalyzes the attachment of tyrosine to tRNA(Tyr) in a two-step reaction: tyrosine is first activated by ATP to form Tyr-AMP and then transferred to the acceptor end of tRNA(Tyr). The polypeptide is Tyrosine--tRNA ligase (Anaeromyxobacter dehalogenans (strain 2CP-C)).